A 199-amino-acid polypeptide reads, in one-letter code: Imidazoleglycerol-phosphate dehydratase (199 aa).

This sequence belongs to the imidazoleglycerol-phosphate dehydratase family.

The protein localises to the cytoplasm. It carries out the reaction D-erythro-1-(imidazol-4-yl)glycerol 3-phosphate = 3-(imidazol-4-yl)-2-oxopropyl phosphate + H2O. The protein operates within amino-acid biosynthesis; L-histidine biosynthesis; L-histidine from 5-phospho-alpha-D-ribose 1-diphosphate: step 6/9. This chain is Imidazoleglycerol-phosphate dehydratase, found in Kineococcus radiotolerans (strain ATCC BAA-149 / DSM 14245 / SRS30216).